The chain runs to 538 residues: Endoglucanase 16 (538 aa).

The N-terminal stretch at 1–26 is a signal peptide; the sequence is MRWRRVGDVVAVALLLGAAAAAAAAA. D83 serves as the catalytic Nucleophile. Active-site residues include H431, D483, and E492. Residues 513-538 form a disordered region; the sequence is RQESPSTTTTTTATTSSPEMGLSVNR. Residues 516–530 show a composition bias toward low complexity; sequence SPSTTTTTTATTSSP.

The protein belongs to the glycosyl hydrolase 9 (cellulase E) family.

The protein resides in the secreted. The enzyme catalyses Endohydrolysis of (1-&gt;4)-beta-D-glucosidic linkages in cellulose, lichenin and cereal beta-D-glucans.. The chain is Endoglucanase 16 from Oryza sativa subsp. japonica (Rice).